A 238-amino-acid chain; its full sequence is ATP synthase subunit a (238 aa).

5 helical membrane-spanning segments follow: residues 16–36 (LIWL…TVLF), 79–99 (GLFM…FFPV), 103–123 (FVFG…SSLL), 129–149 (GLMS…MVVV), and 209–229 (VFGA…CVLL).

Belongs to the ATPase A chain family. As to quaternary structure, F-type ATPases have 2 components, CF(1) - the catalytic core - and CF(0) - the membrane proton channel. CF(1) has five subunits: alpha(3), beta(3), gamma(1), delta(1), epsilon(1). CF(0) has three main subunits: a, b and c.

The protein resides in the mitochondrion inner membrane. Its function is as follows. Mitochondrial membrane ATP synthase (F(1)F(0) ATP synthase or Complex V) produces ATP from ADP in the presence of a proton gradient across the membrane which is generated by electron transport complexes of the respiratory chain. F-type ATPases consist of two structural domains, F(1) - containing the extramembraneous catalytic core and F(0) - containing the membrane proton channel, linked together by a central stalk and a peripheral stalk. During catalysis, ATP synthesis in the catalytic domain of F(1) is coupled via a rotary mechanism of the central stalk subunits to proton translocation. Key component of the proton channel; it may play a direct role in the translocation of protons across the membrane. The protein is ATP synthase subunit a (ATP6) of Mytilus edulis (Blue mussel).